A 246-amino-acid chain; its full sequence is Putative L,D-transpeptidase YafK (246 aa).

Residues 1 to 19 form the signal peptide; sequence MRKIALILAMLLIPCVSFA. One can recognise a L,D-TPase catalytic domain in the interval 44–174; sequence VYIQIFKEER…GQPSVQVSIY (131 aa). His-135 acts as the Proton donor/acceptor in catalysis. Residue Cys-143 is the Nucleophile of the active site.

This sequence belongs to the YkuD family.

The protein operates within cell wall biogenesis; peptidoglycan biosynthesis. The polypeptide is Putative L,D-transpeptidase YafK (yafK) (Escherichia coli O157:H7).